Consider the following 246-residue polypeptide: Probable transcriptional regulatory protein CGSHiEE_01480 (246 aa).

It belongs to the TACO1 family.

The protein resides in the cytoplasm. The chain is Probable transcriptional regulatory protein CGSHiEE_01480 from Haemophilus influenzae (strain PittEE).